The sequence spans 231 residues: Protein crossbronx homolog (231 aa).

The UBC core domain occupies 14 to 168; it reads LQEYKILTEY…VEECVRLSQA (155 aa).

It belongs to the ubiquitin-conjugating enzyme family. FTS subfamily.

The protein is Protein crossbronx homolog of Culex quinquefasciatus (Southern house mosquito).